The primary structure comprises 511 residues: DEP domain-containing protein 7 (511 aa).

One can recognise a DEP domain in the interval 46-136 (LQTQVEVKKR…SSCSLYRFTT (91 aa)).

Belongs to the DEPDC7 family. Expressed in liver.

The chain is DEP domain-containing protein 7 (DEPDC7) from Homo sapiens (Human).